Reading from the N-terminus, the 191-residue chain is Putative resolvase L103 (191 aa).

Positions 11-30 (LEVLKVHYQTLYRMEEKGLI) form a DNA-binding region, H-T-H motif. Residues 59-191 (KGICYCRVSS…KKSGKLKAKK (133 aa)) form the Resolvase/invertase-type recombinase catalytic domain. Residues 65 to 91 (RVSSKKQIKDLNRQVEYMEKNYPEYEI) adopt a coiled-coil conformation. Ser-67 functions as the O-(5'-phospho-DNA)-serine intermediate in the catalytic mechanism.

The protein belongs to the site-specific recombinase resolvase family.

Resolvase catalyzes the resolution (a site-specific recombination) of the cointegrated replicon to yield the final transposition products. The sequence is that of Putative resolvase L103 from Acanthamoeba polyphaga (Amoeba).